The sequence spans 1279 residues: Talin-A (1279 aa).

An FERM domain is found at 84-365 (RPQKFKLLDG…GYIEIIMKAR (282 aa)).

It localises to the cytoplasm. The protein localises to the cytoskeleton. The protein resides in the cell cortex. Its function is as follows. Actin-binding protein that may be involved in the control of cell motility and chemotaxis. This chain is Talin-A (talA), found in Dictyostelium discoideum (Social amoeba).